A 141-amino-acid polypeptide reads, in one-letter code: Small ribosomal subunit protein bS16 (141 aa).

Positions 84-141 (TRKARSNPEKSKPKAKAQERLEAARMAEEEAAAAAKAAAEAPAEEAPAAEAPAEEAQA) are disordered. Residues 89–111 (SNPEKSKPKAKAQERLEAARMAE) are compositionally biased toward basic and acidic residues. Positions 115-141 (AAAAKAAAEAPAEEAPAAEAPAEEAQA) are enriched in low complexity.

It belongs to the bacterial ribosomal protein bS16 family.

The polypeptide is Small ribosomal subunit protein bS16 (Parvibaculum lavamentivorans (strain DS-1 / DSM 13023 / NCIMB 13966)).